The primary structure comprises 264 residues: 5'-nucleotidase SurE (264 aa).

A divalent metal cation-binding residues include Asp-10, Asp-11, Ser-43, and Asn-99.

The protein belongs to the SurE nucleotidase family. A divalent metal cation is required as a cofactor.

The protein localises to the cytoplasm. The catalysed reaction is a ribonucleoside 5'-phosphate + H2O = a ribonucleoside + phosphate. Functionally, nucleotidase that shows phosphatase activity on nucleoside 5'-monophosphates. The sequence is that of 5'-nucleotidase SurE from Methanococcus maripaludis (strain C6 / ATCC BAA-1332).